We begin with the raw amino-acid sequence, 391 residues long: D-alanine--D-alanine ligase (391 aa).

The segment at 1 to 24 is disordered; that stretch reads MSSENLPQSPERAESPQAPRRKPR. In terms of domain architecture, ATP-grasp spans 171–381; that stretch reads KRVFLSFGLP…YPELVDRLIQ (211 aa). 207 to 262 lines the ATP pocket; sequence AGEHGWPLFIKPARGGSSMGITKVDSVEGLDAAIEEARRHDPKFLVESLLRGREIE. 3 residues coordinate Mg(2+): Asp335, Glu348, and Asn350.

It belongs to the D-alanine--D-alanine ligase family. It depends on Mg(2+) as a cofactor. Mn(2+) serves as cofactor.

The protein resides in the cytoplasm. It catalyses the reaction 2 D-alanine + ATP = D-alanyl-D-alanine + ADP + phosphate + H(+). It participates in cell wall biogenesis; peptidoglycan biosynthesis. In terms of biological role, cell wall formation. The chain is D-alanine--D-alanine ligase from Streptomyces griseus subsp. griseus (strain JCM 4626 / CBS 651.72 / NBRC 13350 / KCC S-0626 / ISP 5235).